The sequence spans 549 residues: Lipase 5 (549 aa).

The N-terminal stretch at 1–15 (MKLALALSLIASVAA) is a signal peptide. Residues Cys-75 and Cys-112 are joined by a disulfide bond. Ser-224 (acyl-ester intermediate) is an active-site residue. Residues Cys-283 and Cys-292 are joined by a disulfide bond. Asn-329 carries N-linked (GlcNAc...) asparagine glycosylation. Glu-356 serves as the catalytic Charge relay system. Residue Asn-366 is glycosylated (N-linked (GlcNAc...) asparagine). His-464 (charge relay system) is an active-site residue.

The protein belongs to the type-B carboxylesterase/lipase family.

The catalysed reaction is a triacylglycerol + H2O = a diacylglycerol + a fatty acid + H(+). The protein is Lipase 5 (LIP5) of Diutina rugosa (Yeast).